We begin with the raw amino-acid sequence, 78 residues long: NAD(P)H-quinone oxidoreductase subunit O (78 aa).

Belongs to the complex I NdhO subunit family. NDH-1 can be composed of about 15 different subunits; different subcomplexes with different compositions have been identified which probably have different functions.

It is found in the cellular thylakoid membrane. The enzyme catalyses a plastoquinone + NADH + (n+1) H(+)(in) = a plastoquinol + NAD(+) + n H(+)(out). It catalyses the reaction a plastoquinone + NADPH + (n+1) H(+)(in) = a plastoquinol + NADP(+) + n H(+)(out). Functionally, NDH-1 shuttles electrons from an unknown electron donor, via FMN and iron-sulfur (Fe-S) centers, to quinones in the respiratory and/or the photosynthetic chain. The immediate electron acceptor for the enzyme in this species is believed to be plastoquinone. Couples the redox reaction to proton translocation, and thus conserves the redox energy in a proton gradient. Cyanobacterial NDH-1 also plays a role in inorganic carbon-concentration. This is NAD(P)H-quinone oxidoreductase subunit O from Prochlorococcus marinus (strain MIT 9312).